Here is a 964-residue protein sequence, read N- to C-terminus: Translation initiation factor IF-2 (964 aa).

Residues 105–119 are compositionally biased toward low complexity; that stretch reads AALAESEASEAAPVV. Disordered regions lie at residues 105-133 and 146-378; these read AALA…EHRR and KARQ…PTEP. 4 stretches are compositionally biased toward basic and acidic residues: residues 123 to 133, 146 to 183, 197 to 253, and 266 to 278; these read EVARREEEHRR, KARQ…KAEE, EAPR…RAIR, and PAER…KKAE. The span at 288-302 shows a compositional bias: low complexity; that stretch reads KPAGEARPAAAKKPA. Residues 303–313 are compositionally biased toward pro residues; the sequence is APAPAAAPAPG. Positions 464–633 constitute a tr-type G domain; sequence TRPPVVTVMG…LLQAEVLELK (170 aa). Residues 473-480 form a G1 region; the sequence is GHVDHGKT. 473–480 contacts GTP; that stretch reads GHVDHGKT. Residues 498–502 are G2; sequence GITQH. Residues 519 to 522 are G3; the sequence is DTPG. Residues 519 to 523 and 573 to 576 contribute to the GTP site; these read DTPGH and TKVD. Residues 573 to 576 are G4; sequence TKVD. Residues 609 to 611 form a G5 region; the sequence is SAK.

This sequence belongs to the TRAFAC class translation factor GTPase superfamily. Classic translation factor GTPase family. IF-2 subfamily.

The protein localises to the cytoplasm. One of the essential components for the initiation of protein synthesis. Protects formylmethionyl-tRNA from spontaneous hydrolysis and promotes its binding to the 30S ribosomal subunits. Also involved in the hydrolysis of GTP during the formation of the 70S ribosomal complex. The chain is Translation initiation factor IF-2 from Ralstonia pickettii (strain 12J).